Here is a 206-residue protein sequence, read N- to C-terminus: Putative metal transport protein HI_1621 (206 aa).

The next 6 helical transmembrane spans lie at 6–26 (GVLH…GIAV), 38–58 (LTAL…PVGI), 72–92 (FLGW…VIFF), 94–114 (FGGF…AVIA), 136–156 (IGAG…VLML), and 165–185 (LVWL…IISV).

It belongs to the CbiM family.

Its subcellular location is the cell membrane. May be involved in metal transport. This Haemophilus influenzae (strain ATCC 51907 / DSM 11121 / KW20 / Rd) protein is Putative metal transport protein HI_1621.